The primary structure comprises 427 residues: 3-phosphoshikimate 1-carboxyvinyltransferase (427 aa).

3-phosphoshikimate contacts are provided by lysine 22, serine 23, and arginine 27. Lysine 22 lines the phosphoenolpyruvate pocket. Positions 96 and 124 each coordinate phosphoenolpyruvate. Positions 169, 170, 171, 197, 313, 336, and 340 each coordinate 3-phosphoshikimate. Residue glutamine 171 coordinates phosphoenolpyruvate. Aspartate 313 acts as the Proton acceptor in catalysis. Phosphoenolpyruvate-binding residues include arginine 344, arginine 386, and lysine 411.

Belongs to the EPSP synthase family. In terms of assembly, monomer.

The protein localises to the cytoplasm. It catalyses the reaction 3-phosphoshikimate + phosphoenolpyruvate = 5-O-(1-carboxyvinyl)-3-phosphoshikimate + phosphate. It functions in the pathway metabolic intermediate biosynthesis; chorismate biosynthesis; chorismate from D-erythrose 4-phosphate and phosphoenolpyruvate: step 6/7. In terms of biological role, catalyzes the transfer of the enolpyruvyl moiety of phosphoenolpyruvate (PEP) to the 5-hydroxyl of shikimate-3-phosphate (S3P) to produce enolpyruvyl shikimate-3-phosphate and inorganic phosphate. This is 3-phosphoshikimate 1-carboxyvinyltransferase from Escherichia coli O6:H1 (strain CFT073 / ATCC 700928 / UPEC).